A 338-amino-acid chain; its full sequence is Adenylosuccinate synthetase (338 aa).

GTP-binding positions include 12 to 18 and 42 to 44; these read GDEGKGK and GHT. Asp13 acts as the Proton acceptor in catalysis. 2 residues coordinate Mg(2+): Asp13 and Gly42. Residues 13 to 16, 40 to 43, Thr127, Arg141, Gln179, Thr194, and Arg256 each bind IMP; these read DEGK and NAGH. Residue His43 is the Proton donor of the active site. A substrate-binding site is contributed by 252-258; the sequence is TVTGRRR. GTP is bound by residues Arg258, 284 to 286, and 324 to 326; these read CLD and STG.

The protein belongs to the adenylosuccinate synthetase family. As to quaternary structure, homodimer. Mg(2+) serves as cofactor.

It is found in the cytoplasm. The catalysed reaction is IMP + L-aspartate + GTP = N(6)-(1,2-dicarboxyethyl)-AMP + GDP + phosphate + 2 H(+). Its pathway is purine metabolism; AMP biosynthesis via de novo pathway; AMP from IMP: step 1/2. Plays an important role in the de novo pathway of purine nucleotide biosynthesis. Catalyzes the first committed step in the biosynthesis of AMP from IMP. This chain is Adenylosuccinate synthetase, found in Methanococcus maripaludis (strain C7 / ATCC BAA-1331).